A 479-amino-acid chain; its full sequence is Ribulose bisphosphate carboxylase large chain (479 aa).

Residues 1-2 (MS) constitute a propeptide that is removed on maturation. P3 is subject to N-acetylproline. Residues T65, N123, 173-177 (TIKPK), and 201-204 (KDDE) each bind substrate. Catalysis depends on K175, which acts as the Proton acceptor. Mg(2+)-binding residues include K201, D203, and E204. An N6-carboxylysine modification is found at K201. S208 carries the phosphoserine modification. H294 serves as the catalytic Proton acceptor. Substrate is bound by residues 294–295 (HR) and H327. A Phosphothreonine modification is found at T330. Residues K334 and 379-381 (SGG) contribute to the substrate site.

It belongs to the RuBisCO large chain family. Type I subfamily. As to quaternary structure, heterohexadecamer of 8 large chains and 8 small chains; disulfide-linked. The disulfide link is formed within the large subunit homodimers. Interacts with RBCX1 and RBCX1. An intermediate complex made of eight RbcL subunits interacts with the chaperone BSD2. Requires Mg(2+) as cofactor. The disulfide bond which can form in the large chain dimeric partners within the hexadecamer appears to be associated with oxidative stress and protein turnover.

It is found in the plastid. The protein localises to the chloroplast. The enzyme catalyses 2 (2R)-3-phosphoglycerate + 2 H(+) = D-ribulose 1,5-bisphosphate + CO2 + H2O. It catalyses the reaction D-ribulose 1,5-bisphosphate + O2 = 2-phosphoglycolate + (2R)-3-phosphoglycerate + 2 H(+). In terms of biological role, ruBisCO catalyzes two reactions: the carboxylation of D-ribulose 1,5-bisphosphate, the primary event in carbon dioxide fixation, as well as the oxidative fragmentation of the pentose substrate in the photorespiration process. Both reactions occur simultaneously and in competition at the same active site. Binds to abscisic acid (ABA). This Arabidopsis thaliana (Mouse-ear cress) protein is Ribulose bisphosphate carboxylase large chain.